Reading from the N-terminus, the 293-residue chain is Energy-coupling factor transporter ATP-binding protein EcfA2 (293 aa).

One can recognise an ABC transporter domain in the interval 3 to 246 (ITFQKVEHRY…ADELEKIGVD (244 aa)). ATP is bound at residue 40 to 47 (GHTGSGKS).

It belongs to the ABC transporter superfamily. Energy-coupling factor EcfA family. In terms of assembly, forms a stable energy-coupling factor (ECF) transporter complex composed of 2 membrane-embedded substrate-binding proteins (S component), 2 ATP-binding proteins (A component) and 2 transmembrane proteins (T component).

Its subcellular location is the cell membrane. In terms of biological role, ATP-binding (A) component of a common energy-coupling factor (ECF) ABC-transporter complex. Unlike classic ABC transporters this ECF transporter provides the energy necessary to transport a number of different substrates. The protein is Energy-coupling factor transporter ATP-binding protein EcfA2 of Bacillus thuringiensis (strain Al Hakam).